Reading from the N-terminus, the 299-residue chain is MKPDAQHVKQFLLRLQDDICQTLSAVDGANFIEDSWRREAGGGGRSRVLRNGGIFEQAGVNFSHVNGDAMPASATAHRPELVGRSFEAMGVSLVVHPRNPYIPTSHANVRFFIAEKPGADPVWWFGGGFDLTPYYGFEEDAVHWHRTARDLCQPFGEDVYPRYKKWCDDYFFIKHRNEQRGIGGLFFDDLNTPDFASCFAFMQAVGKGYTEAYLPIVERRKTMAWGERERSFQLYRRGRYVEFNLVWDRGTLFGLQTGGRTESILMSMPPLVRWEYDYQPKEGSPEAALSEFIQVRDWV.

Residue Ser-92 participates in substrate binding. A divalent metal cation-binding residues include His-96 and His-106. Residue His-106 is the Proton donor of the active site. 108–110 contributes to the substrate binding site; sequence NVR. Residues His-145 and His-175 each contribute to the a divalent metal cation site. An important for dimerization region spans residues 240 to 275; it reads YVEFNLVWDRGTLFGLQTGGRTESILMSMPPLVRWE. Position 258-260 (258-260) interacts with substrate; it reads GGR.

This sequence belongs to the aerobic coproporphyrinogen-III oxidase family. As to quaternary structure, homodimer. A divalent metal cation is required as a cofactor.

The protein localises to the cytoplasm. The catalysed reaction is coproporphyrinogen III + O2 + 2 H(+) = protoporphyrinogen IX + 2 CO2 + 2 H2O. It functions in the pathway porphyrin-containing compound metabolism; protoporphyrin-IX biosynthesis; protoporphyrinogen-IX from coproporphyrinogen-III (O2 route): step 1/1. Involved in the heme biosynthesis. Catalyzes the aerobic oxidative decarboxylation of propionate groups of rings A and B of coproporphyrinogen-III to yield the vinyl groups in protoporphyrinogen-IX. In Salmonella arizonae (strain ATCC BAA-731 / CDC346-86 / RSK2980), this protein is Oxygen-dependent coproporphyrinogen-III oxidase.